Here is a 249-residue protein sequence, read N- to C-terminus: uncharacterized protein (249 aa).

This is an uncharacterized protein from Escherichia coli O6:H1 (strain CFT073 / ATCC 700928 / UPEC).